We begin with the raw amino-acid sequence, 189 residues long: GMP synthase [glutamine-hydrolyzing] subunit A (189 aa).

Residues 5-189 (KIIVINNYGQ…MNFFKVCEDY (185 aa)) form the Glutamine amidotransferase type-1 domain. Catalysis depends on C79, which acts as the Nucleophile. Residues H166 and E168 contribute to the active site.

Heterodimer composed of a glutamine amidotransferase subunit (A) and a GMP-binding subunit (B).

It catalyses the reaction XMP + L-glutamine + ATP + H2O = GMP + L-glutamate + AMP + diphosphate + 2 H(+). The protein operates within purine metabolism; GMP biosynthesis; GMP from XMP (L-Gln route): step 1/1. Its function is as follows. Catalyzes the synthesis of GMP from XMP. The chain is GMP synthase [glutamine-hydrolyzing] subunit A from Methanococcoides burtonii (strain DSM 6242 / NBRC 107633 / OCM 468 / ACE-M).